A 143-amino-acid chain; its full sequence is Type II secretion system core protein G (143 aa).

A propeptide spans 1-17 (MIKRSITRSPSRAGQAG) (leader sequence). Position 18 is an N-methylmethionine (methionine 18). Residues 18–38 (MSLLEIIIVIVLIGAVLTLVG) traverse the membrane as a helical segment.

This sequence belongs to the GSP G family. In terms of assembly, type II secretion system is composed of four main components: the outer membrane complex, the inner membrane complex, the cytoplasmic secretion ATPase and the periplasm-spanning pseudopilus. Forms homomultimers. Interacts with pseudopilin tip complex component XpsJ as well as XpsI and XcpH. Interacts with XpsN and secretin XpsD. Post-translationally, cleaved by the prepilin peptidase. In terms of processing, methylated by prepilin peptidase at the amino group of the N-terminal methionine once the leader sequence is cleaved.

It is found in the cell inner membrane. Functionally, core component of the type II secretion system required for the energy-dependent secretion of extracellular factors such as proteases and toxins from the periplasm. Pseudopilin (pilin-like) protein that polymerizes to form the pseudopilus. Further polymerization triggers pseudopilus growth. The protein is Type II secretion system core protein G (xpsG) of Xanthomonas campestris pv. campestris (strain ATCC 33913 / DSM 3586 / NCPPB 528 / LMG 568 / P 25).